Here is a 427-residue protein sequence, read N- to C-terminus: G2/mitotic-specific cyclin-B1 (427 aa).

The interval Ala33–Thr126 is disordered. Position 73 is an N6-acetyllysine (Lys73). Residues Glu100–Ser110 are compositionally biased toward basic and acidic residues. Ser120 is modified (phosphoserine; by CDK1). Phosphoserine is present on Ser122. A Phosphoserine; by PLK1 modification is found at Ser127. Residue Ser141 is modified to Phosphoserine. Interaction with CDK2 regions lie at residues Glu163–Tyr171 and Tyr252–Met255. Phosphothreonine is present on Thr315.

Belongs to the cyclin family. Cyclin AB subfamily. In terms of assembly, interacts with the CDC2 protein kinase to form a serine/threonine kinase holoenzyme complex also known as maturation promoting factor (MPF). The cyclin subunit imparts substrate specificity to the complex. Binds HEI10. Interacts with catalytically active RALBP1 and CDC2 during mitosis to form an endocytotic complex during interphase. Interacts with CCNF; interaction is required for nuclear localization. Interacts with CDK5RAP3. Interacts with RFPL4A and UBE2A. Interacts with INCA1. Post-translationally, ubiquitinated by the SCF(NIPA) complex during interphase, leading to its destruction. Deubiquitinated by USP22 during G2/M phase. Phosphorylated by PLK1 at Ser-127 on centrosomes during prophase: phosphorylation by PLK1 does not cause nuclear import. Phosphorylation at Ser-141 was also reported to be mediated by PLK1 but Ser-127 seems to be the primary phosphorylation site.

It localises to the cytoplasm. It is found in the nucleus. The protein localises to the cytoskeleton. The protein resides in the microtubule organizing center. Its subcellular location is the centrosome. Essential for the control of the cell cycle at the G2/M (mitosis) transition. The protein is G2/mitotic-specific cyclin-B1 (CCNB1) of Bos taurus (Bovine).